A 1375-amino-acid polypeptide reads, in one-letter code: ARF guanine-nucleotide exchange factor GNL2 (1375 aa).

Positions 486–676 (HIRVRKAQKR…SELFQSIATN (191 aa)) constitute an SEC7 domain. The active site involves E590.

In terms of assembly, homodimer. In terms of tissue distribution, preferentially expressed in mature pollen grains and growing pollen tubes.

The protein resides in the cytoplasm. It is found in the cytosol. Its subcellular location is the membrane. Functionally, activates the ARF proteins by exchanging bound GDP for free GTP. Plays a role in vesicular protein sorting. Essential for pollen germination. The chain is ARF guanine-nucleotide exchange factor GNL2 (GNL2) from Arabidopsis thaliana (Mouse-ear cress).